We begin with the raw amino-acid sequence, 498 residues long: Glycerol kinase (498 aa).

Threonine 14 contacts ADP. Threonine 14, threonine 15, and serine 16 together coordinate ATP. Threonine 14 contributes to the sn-glycerol 3-phosphate binding site. Arginine 18 provides a ligand contact to ADP. Arginine 84, glutamate 85, and tyrosine 136 together coordinate sn-glycerol 3-phosphate. 3 residues coordinate glycerol: arginine 84, glutamate 85, and tyrosine 136. At histidine 232 the chain carries Phosphohistidine; by HPr. Aspartate 246 is a binding site for sn-glycerol 3-phosphate. Glycerol-binding residues include aspartate 246 and glutamine 247. ADP is bound by residues threonine 268 and glycine 311. Residues threonine 268, glycine 311, glutamine 315, and glycine 412 each contribute to the ATP site. Positions 412 and 416 each coordinate ADP.

This sequence belongs to the FGGY kinase family. Homotetramer and homodimer (in equilibrium). The phosphoenolpyruvate-dependent sugar phosphotransferase system (PTS), including enzyme I, and histidine-containing protein (HPr) are required for the phosphorylation, which leads to the activation of the enzyme.

The enzyme catalyses glycerol + ATP = sn-glycerol 3-phosphate + ADP + H(+). The protein operates within polyol metabolism; glycerol degradation via glycerol kinase pathway; sn-glycerol 3-phosphate from glycerol: step 1/1. With respect to regulation, activated by phosphorylation and inhibited by fructose 1,6-bisphosphate (FBP). Its function is as follows. Key enzyme in the regulation of glycerol uptake and metabolism. Catalyzes the phosphorylation of glycerol to yield sn-glycerol 3-phosphate. This Lactococcus lactis subsp. lactis (strain IL1403) (Streptococcus lactis) protein is Glycerol kinase.